A 231-amino-acid polypeptide reads, in one-letter code: 2-C-methyl-D-erythritol 4-phosphate cytidylyltransferase (231 aa).

The protein belongs to the IspD/TarI cytidylyltransferase family. IspD subfamily.

It catalyses the reaction 2-C-methyl-D-erythritol 4-phosphate + CTP + H(+) = 4-CDP-2-C-methyl-D-erythritol + diphosphate. Its pathway is isoprenoid biosynthesis; isopentenyl diphosphate biosynthesis via DXP pathway; isopentenyl diphosphate from 1-deoxy-D-xylulose 5-phosphate: step 2/6. Functionally, catalyzes the formation of 4-diphosphocytidyl-2-C-methyl-D-erythritol from CTP and 2-C-methyl-D-erythritol 4-phosphate (MEP). In Xylella fastidiosa (strain M23), this protein is 2-C-methyl-D-erythritol 4-phosphate cytidylyltransferase.